We begin with the raw amino-acid sequence, 917 residues long: Probable dipeptidyl-aminopeptidase B (917 aa).

The interval Met-1–Trp-75 is disordered. The Cytoplasmic segment spans residues Met-1–Gln-93. A compositionally biased stretch (low complexity) spans Asp-27–Val-39. The segment covering Asp-40–Pro-49 has biased composition (polar residues). Positions Val-57–Asp-69 are enriched in basic and acidic residues. A helical; Signal-anchor for type II membrane protein membrane pass occupies residues Ile-94 to Phe-114. At Val-115–Arg-917 the chain is on the vacuolar side. The span at Thr-124–Pro-133 shows a compositional bias: polar residues. The interval Thr-124 to Pro-150 is disordered. 3 N-linked (GlcNAc...) asparagine glycosylation sites follow: Asn-206, Asn-302, and Asn-354. The Charge relay system role is filled by Ser-759. N-linked (GlcNAc...) asparagine glycosylation occurs at Asn-818. Catalysis depends on charge relay system residues Asp-836 and His-869.

The protein belongs to the peptidase S9B family.

Its subcellular location is the vacuole membrane. The enzyme catalyses Release of an N-terminal dipeptide, Xaa-Yaa-|-Zaa-, from a polypeptide, preferentially when Yaa is Pro, provided Zaa is neither Pro nor hydroxyproline.. In terms of biological role, type IV dipeptidyl-peptidase which removes N-terminal dipeptides sequentially from polypeptides having unsubstituted N-termini provided that the penultimate residue is proline. The sequence is that of Probable dipeptidyl-aminopeptidase B (DAPB) from Arthroderma gypseum (strain ATCC MYA-4604 / CBS 118893) (Microsporum gypseum).